The following is a 1406-amino-acid chain: DNA-directed RNA polymerase subunit beta' (1406 aa).

Zn(2+)-binding residues include Cys72, Cys74, Cys87, and Cys90. Asp462, Asp464, and Asp466 together coordinate Mg(2+). Residues Cys816, Cys889, Cys896, and Cys899 each contribute to the Zn(2+) site.

The protein belongs to the RNA polymerase beta' chain family. In terms of assembly, the RNAP catalytic core consists of 2 alpha, 1 beta, 1 beta' and 1 omega subunit. When a sigma factor is associated with the core the holoenzyme is formed, which can initiate transcription. Mg(2+) is required as a cofactor. It depends on Zn(2+) as a cofactor.

It carries out the reaction RNA(n) + a ribonucleoside 5'-triphosphate = RNA(n+1) + diphosphate. In terms of biological role, DNA-dependent RNA polymerase catalyzes the transcription of DNA into RNA using the four ribonucleoside triphosphates as substrates. This chain is DNA-directed RNA polymerase subunit beta', found in Psychrobacter sp. (strain PRwf-1).